A 360-amino-acid polypeptide reads, in one-letter code: Phenylalanine--tRNA ligase alpha subunit (360 aa).

A Mg(2+)-binding site is contributed by glutamate 260.

This sequence belongs to the class-II aminoacyl-tRNA synthetase family. Phe-tRNA synthetase alpha subunit type 1 subfamily. Tetramer of two alpha and two beta subunits. Mg(2+) serves as cofactor.

The protein resides in the cytoplasm. It catalyses the reaction tRNA(Phe) + L-phenylalanine + ATP = L-phenylalanyl-tRNA(Phe) + AMP + diphosphate + H(+). The sequence is that of Phenylalanine--tRNA ligase alpha subunit from Methylobacterium nodulans (strain LMG 21967 / CNCM I-2342 / ORS 2060).